We begin with the raw amino-acid sequence, 687 residues long: FAD-dependent oxidoreductase domain-containing protein 2 (687 aa).

Residues 1–22 (MSVIQLVFRLLCVLDLLLAVSA) form the signal peptide. N-linked (GlcNAc...) asparagine glycans are attached at residues asparagine 29 and asparagine 305.

This sequence belongs to the FOXRED2 family. It depends on FAD as a cofactor. N-glycosylated.

It is found in the endoplasmic reticulum lumen. Probable flavoprotein which may function in endoplasmic reticulum associated degradation (ERAD). May bind non-native proteins in the endoplasmic reticulum and target them to the ubiquitination machinery for subsequent degradation. The chain is FAD-dependent oxidoreductase domain-containing protein 2 (foxred2) from Danio rerio (Zebrafish).